The primary structure comprises 226 residues: Cytidylate kinase (226 aa).

10-18 (GPASSGKST) serves as a coordination point for ATP.

The protein belongs to the cytidylate kinase family. Type 1 subfamily.

It localises to the cytoplasm. It catalyses the reaction CMP + ATP = CDP + ADP. It carries out the reaction dCMP + ATP = dCDP + ADP. This Streptococcus thermophilus (strain ATCC BAA-491 / LMD-9) protein is Cytidylate kinase.